The following is a 507-amino-acid chain: Glycosyltransferase family 92 protein C33H5.2 (507 aa).

Residues 6–26 (VILVFCASFALFFTFIIFGRY) traverse the membrane as a helical segment. The GT92 domain maps to 155-444 (RDVVMCIAPL…LKCYNEKFYD (290 aa)).

Belongs to the glycosyltransferase 92 family.

The protein localises to the membrane. The polypeptide is Glycosyltransferase family 92 protein C33H5.2 (Caenorhabditis elegans).